The following is a 237-amino-acid chain: Large ribosomal subunit protein uL1 (237 aa).

This sequence belongs to the universal ribosomal protein uL1 family. Part of the 50S ribosomal subunit.

Binds directly to 23S rRNA. The L1 stalk is quite mobile in the ribosome, and is involved in E site tRNA release. In terms of biological role, protein L1 is also a translational repressor protein, it controls the translation of the L11 operon by binding to its mRNA. The chain is Large ribosomal subunit protein uL1 from Corynebacterium kroppenstedtii (strain DSM 44385 / JCM 11950 / CIP 105744 / CCUG 35717).